Consider the following 1033-residue polypeptide: Immunoglobulin superfamily member 2 (1033 aa).

The signal sequence occupies residues M1–G20. Residues Q21–P970 are Extracellular-facing. 7 consecutive Ig-like C2-type domains span residues R22–T141, P144–T266, P279–G388, P408–S529, L539–S657, P670–S797, and P806–N941. A disulfide bridge links C43 with C121. Residue N139 is glycosylated (N-linked (GlcNAc...) asparagine). Cysteines 168 and 249 form a disulfide. The short motif at E253 to I255 is the EWI motif element. 3 cysteine pairs are disulfide-bonded: C304–C377, C432–C509, and C560–C638. A glycan (N-linked (GlcNAc...) asparagine) is linked at N677. 2 cysteine pairs are disulfide-bonded: C695-C776 and C832-C925. The chain crosses the membrane as a helical span at residues L971–L991. Residues C992–Y1033 lie on the Cytoplasmic side of the membrane.

N-glycosylated.

It is found in the membrane. In terms of biological role, plays a role as inhibitor of T-cells proliferation induced by CD3. Inhibits expression of IL2RA on activated T-cells and secretion of IL2. Inhibits tyrosine kinases that are required for IL2 production and cellular proliferation. Inhibits phospholipase C-gamma-1/PLCG1 phosphorylation and subsequent CD3-induced changes in intracellular free calcium. Prevents nuclear translocation of nuclear factor of activated T-cell to the nucleus. Plays a role in the inhibition of T-cell proliferation via IL10 secretion by cutaneous dendritic cells. In Mus musculus (Mouse), this protein is Immunoglobulin superfamily member 2 (Cd101).